Here is a 144-residue protein sequence, read N- to C-terminus: Phosphomevalonate dehydratase small subunit (144 aa).

Catalysis depends on Ser65, which acts as the Proton acceptor.

It belongs to the AcnX type II small subunit family. Heterodimer composed of a large subunit (PMDh-L) and a small subunit (PMDh-S).

The catalysed reaction is (R)-5-phosphomevalonate = (2E)-3-methyl-5-phosphooxypent-2-enoate + H2O. The protein operates within isoprenoid biosynthesis; isopentenyl diphosphate biosynthesis via mevalonate pathway. Component of a hydro-lyase that catalyzes the dehydration of mevalonate 5-phosphate (MVA5P) to form trans-anhydromevalonate 5-phosphate (tAHMP). Involved in the archaeal mevalonate (MVA) pathway, which provides fundamental precursors for isoprenoid biosynthesis, such as isopentenyl diphosphate (IPP) and dimethylallyl diphosphate (DMAPP). This Methanosarcina acetivorans (strain ATCC 35395 / DSM 2834 / JCM 12185 / C2A) protein is Phosphomevalonate dehydratase small subunit.